Here is a 396-residue protein sequence, read N- to C-terminus: Elongation factor Tu (396 aa).

Residues 10-206 (KPHCNIGTIG…AVDAYIPQPE (197 aa)) enclose the tr-type G domain. Residues 19–26 (GHVDHGKT) form a G1 region. 19 to 26 (GHVDHGKT) is a binding site for GTP. T26 contacts Mg(2+). The tract at residues 60–64 (GITIS) is G2. The segment at 81-84 (DCPG) is G3. Residues 81-85 (DCPGH) and 136-139 (NKCD) contribute to the GTP site. Residues 136 to 139 (NKCD) are G4. The tract at residues 174–176 (SAL) is G5.

Belongs to the TRAFAC class translation factor GTPase superfamily. Classic translation factor GTPase family. EF-Tu/EF-1A subfamily. In terms of assembly, monomer.

It is found in the cytoplasm. It catalyses the reaction GTP + H2O = GDP + phosphate + H(+). Functionally, GTP hydrolase that promotes the GTP-dependent binding of aminoacyl-tRNA to the A-site of ribosomes during protein biosynthesis. The protein is Elongation factor Tu of Nitrobacter winogradskyi (strain ATCC 25391 / DSM 10237 / CIP 104748 / NCIMB 11846 / Nb-255).